A 580-amino-acid polypeptide reads, in one-letter code: N(6)-adenosine-methyltransferase catalytic subunit METTL3 (580 aa).

A disordered region spans residues 1 to 70 (MSDTWSSIQA…PKPSTTSVAP (70 aa)). Position 2 is an N-acetylserine; alternate (serine 2). Serine 2 is modified (phosphoserine; alternate). Residues 28–37 (QDSGHLDLRN) show a composition bias toward basic and acidic residues. A phosphoserine mark is found at serine 43, serine 48, and serine 50. A compositionally biased stretch (low complexity) spans 55–67 (APTSSGPKPSTTS). Residues lysine 177, lysine 211, lysine 212, and lysine 215 each participate in a glycyl lysine isopeptide (Lys-Gly) (interchain with G-Cter in SUMO1) cross-link. Residues 198 to 217 (LASSASEPAKEPAKKSRKHA) form a disordered region. Residues 210–215 (AKKSRK) carry the Nuclear localization signal motif. Residues serine 219, serine 243, and serine 350 each carry the phosphoserine modification. S-adenosyl-L-methionine-binding positions include 377–378 (DI) and aspartate 395. Positions 396–410 (PPWDIHMELPYGTLT) are gate loop 1. Interaction with METTL14 regions lie at residues 450–454 (ERVDE) and 464–480 (QRII…NHGK). Residues 462–479 (QLQRIIRTGRTGHWLNHG) are interphase loop. The interval 465–478 (RIIRTGRTGHWLNH) is positively charged region required for RNA-binding. The interval 507 to 515 (VRSTSHKPD) is gate loop 2. Residues lysine 513, 536-539 (RPHN), and 549-550 (NQ) each bind S-adenosyl-L-methionine.

It belongs to the MT-A70-like family. Heterodimer; heterodimerizes with METTL14 to form an antiparallel heterodimer that constitutes an active methyltransferase. Component of the WMM complex, a N6-methyltransferase complex composed of a catalytic subcomplex, named MAC, and of an associated subcomplex, named MACOM. The MAC subcomplex is composed of METTL3 and METTL14. The MACOM subcomplex is composed of WTAP, ZC3H13, CBLL1/HAKAI, VIRMA, and, in some cases of RBM15 (RBM15 or RBM15B). Interacts with NCBP1/CBP80. Interacts with EIF4E. Interacts with EIF3B. In terms of processing, sumoylation inhibits the N6-adenosine-methyltransferase activity. Sumoylation does not affect subcellular location or interaction with METTL14. Desumoylated by SENP1. Present in both germ cells and somatic cells during testis development (at protein level).

The protein localises to the nucleus. It localises to the nucleus speckle. It is found in the cytoplasm. It catalyses the reaction an adenosine in mRNA + S-adenosyl-L-methionine = an N(6)-methyladenosine in mRNA + S-adenosyl-L-homocysteine + H(+). Its activity is regulated as follows. Methyltransferase activity is regulated by miRNAs via a sequence pairing mechanism. Methyltransferase activity is inhibited by sumoylation. In terms of biological role, the METTL3-METTL14 heterodimer forms a N6-methyltransferase complex that methylates adenosine residues at the N(6) position of some RNAs and regulates various processes such as the circadian clock, differentiation of embryonic and hematopoietic stem cells, cortical neurogenesis, response to DNA damage, differentiation of T-cells and primary miRNA processing. In the heterodimer formed with METTL14, METTL3 constitutes the catalytic core. N6-methyladenosine (m6A), which takes place at the 5'-[AG]GAC-3' consensus sites of some mRNAs, plays a role in mRNA stability, processing, translation efficiency and editing. M6A acts as a key regulator of mRNA stability: methylation is completed upon the release of mRNA into the nucleoplasm and promotes mRNA destabilization and degradation. In embryonic stem cells (ESCs), m6A methylation of mRNAs encoding key naive pluripotency-promoting transcripts results in transcript destabilization, promoting differentiation of ESCs. M6A regulates the length of the circadian clock: acts as an early pace-setter in the circadian loop by putting mRNA production on a fast-track for facilitating nuclear processing, thereby providing an early point of control in setting the dynamics of the feedback loop. M6A also regulates circadian regulation of hepatic lipid metabolism. M6A regulates spermatogonial differentiation and meiosis and is essential for male fertility and spermatogenesis. Also required for oogenesis. Involved in the response to DNA damage: in response to ultraviolet irradiation, METTL3 rapidly catalyzes the formation of m6A on poly(A) transcripts at DNA damage sites, leading to the recruitment of POLK to DNA damage sites. M6A is also required for T-cell homeostasis and differentiation: m6A methylation of transcripts of SOCS family members (SOCS1, SOCS3 and CISH) in naive T-cells promotes mRNA destabilization and degradation, promoting T-cell differentiation. Inhibits the type I interferon response by mediating m6A methylation of IFNB. M6A also regulates cortical neurogenesis: m6A methylation of transcripts related to transcription factors, neural stem cells, the cell cycle and neuronal differentiation during brain development promotes their destabilization and decay, promoting differentiation of radial glial cells. M6A also takes place in other RNA molecules, such as primary miRNA (pri-miRNAs). Mediates m6A methylation of Xist RNA, thereby participating in random X inactivation: m6A methylation of Xist leads to target YTHDC1 reader on Xist and promote transcription repression activity of Xist. METTL3 mediates methylation of pri-miRNAs, marking them for recognition and processing by DGCR8. Acts as a positive regulator of mRNA translation independently of the methyltransferase activity: promotes translation by interacting with the translation initiation machinery in the cytoplasm. This is N(6)-adenosine-methyltransferase catalytic subunit METTL3 from Mus musculus (Mouse).